A 385-amino-acid polypeptide reads, in one-letter code: Spindle pole component BBP1 (385 aa).

S29 carries the post-translational modification Phosphoserine. Residues 34-48 (YKDQEERRDRSRYAQ) are compositionally biased toward basic and acidic residues. The segment at 34–76 (YKDQEERRDRSRYAQDDTNFSMKFGNDSNRRSTNLSRSNSWSG) is disordered. A compositionally biased stretch (low complexity) spans 64-75 (RSTNLSRSNSWS). S73 and S115 each carry phosphoserine. Positions 229–355 (QMDLNSRDLE…KDMQRDNYES (127 aa)) form a coiled coil.

Belongs to the BBP1 family. Homodimer. Interacts with KAR1, MPS2 and SPC29.

The protein localises to the cytoplasm. Its subcellular location is the cytoskeleton. It localises to the microtubule organizing center. The protein resides in the spindle pole body. Component of the spindle pole body (SPB) required for insertion of the nascent SPB into the nuclear envelope and for the proper execution of spindle pole body (SPB) duplication. Connects the central plaque of the SPB with the half-bridge. Required for proper localization of CDC5 at the SPB and for proper M-phase progression. In Saccharomyces cerevisiae (strain ATCC 204508 / S288c) (Baker's yeast), this protein is Spindle pole component BBP1 (BBP1).